Consider the following 285-residue polypeptide: 4-hydroxybenzoate octaprenyltransferase (285 aa).

Transmembrane regions (helical) follow at residues 28–48, 86–106, 110–130, 133–153, 165–185, 210–230, 232–252, and 262–284; these read LWAM…WIFV, IAAW…FALV, NALT…YPFF, FFAI…PMAF, WLML…YAMV, IMLC…LLGL, WPYW…YTLI, and AAFR…AYAI.

It belongs to the UbiA prenyltransferase family. It depends on Mg(2+) as a cofactor.

The protein resides in the cell inner membrane. The enzyme catalyses all-trans-octaprenyl diphosphate + 4-hydroxybenzoate = 4-hydroxy-3-(all-trans-octaprenyl)benzoate + diphosphate. It functions in the pathway cofactor biosynthesis; ubiquinone biosynthesis. Catalyzes the prenylation of para-hydroxybenzoate (PHB) with an all-trans polyprenyl group. Mediates the second step in the final reaction sequence of ubiquinone-8 (UQ-8) biosynthesis, which is the condensation of the polyisoprenoid side chain with PHB, generating the first membrane-bound Q intermediate 3-octaprenyl-4-hydroxybenzoate. This is 4-hydroxybenzoate octaprenyltransferase from Cupriavidus necator (strain ATCC 17699 / DSM 428 / KCTC 22496 / NCIMB 10442 / H16 / Stanier 337) (Ralstonia eutropha).